Here is a 210-residue protein sequence, read N- to C-terminus: RNA chaperone ProQ (210 aa).

Basic and acidic residues predominate over residues 98–127 (HAKASLEESKAKVAARRKEQAKKAREEAKA). Residues 98–155 (HAKASLEESKAKVAARRKEQAKKAREEAKAKKPARATTPPKRRPQPAAVAKKQEKPVE) are disordered.

The protein belongs to the ProQ family.

Its subcellular location is the cytoplasm. RNA chaperone with significant RNA binding, RNA strand exchange and RNA duplexing activities. In Aliivibrio salmonicida (strain LFI1238) (Vibrio salmonicida (strain LFI1238)), this protein is RNA chaperone ProQ.